A 212-amino-acid chain; its full sequence is Pyridoxine/pyridoxamine 5'-phosphate oxidase (212 aa).

Residues 7–10 (RAKY) and Lys-65 contribute to the substrate site. Residues 60-65 (RTVLLK), 75-76 (FT), Lys-82, and Gln-104 contribute to the FMN site. Substrate is bound by residues Tyr-122, Arg-126, and Ser-130. FMN is bound by residues 139-140 (QS) and Trp-184. Residue 190-192 (RLH) coordinates substrate. Position 194 (Arg-194) interacts with FMN.

It belongs to the pyridoxamine 5'-phosphate oxidase family. Homodimer. Requires FMN as cofactor.

The catalysed reaction is pyridoxamine 5'-phosphate + O2 + H2O = pyridoxal 5'-phosphate + H2O2 + NH4(+). The enzyme catalyses pyridoxine 5'-phosphate + O2 = pyridoxal 5'-phosphate + H2O2. The protein operates within cofactor metabolism; pyridoxal 5'-phosphate salvage; pyridoxal 5'-phosphate from pyridoxamine 5'-phosphate: step 1/1. Its pathway is cofactor metabolism; pyridoxal 5'-phosphate salvage; pyridoxal 5'-phosphate from pyridoxine 5'-phosphate: step 1/1. Functionally, catalyzes the oxidation of either pyridoxine 5'-phosphate (PNP) or pyridoxamine 5'-phosphate (PMP) into pyridoxal 5'-phosphate (PLP). The polypeptide is Pyridoxine/pyridoxamine 5'-phosphate oxidase (Aliarcobacter butzleri (strain RM4018) (Arcobacter butzleri)).